We begin with the raw amino-acid sequence, 498 residues long: Glycerol kinase (498 aa).

Residue threonine 12 participates in ADP binding. ATP-binding residues include threonine 12, threonine 13, and serine 14. Threonine 12 lines the sn-glycerol 3-phosphate pocket. Arginine 16 contributes to the ADP binding site. Sn-glycerol 3-phosphate contacts are provided by arginine 82, glutamate 83, tyrosine 134, and aspartate 243. Positions 82, 83, 134, 243, and 244 each coordinate glycerol. ADP-binding residues include threonine 265 and glycine 308. Positions 265, 308, 312, and 409 each coordinate ATP. Glycine 409 and asparagine 413 together coordinate ADP.

Belongs to the FGGY kinase family. As to quaternary structure, homotetramer and homodimer (in equilibrium).

It catalyses the reaction glycerol + ATP = sn-glycerol 3-phosphate + ADP + H(+). It participates in polyol metabolism; glycerol degradation via glycerol kinase pathway; sn-glycerol 3-phosphate from glycerol: step 1/1. Its activity is regulated as follows. Activated by phosphorylation and inhibited by fructose 1,6-bisphosphate (FBP). Key enzyme in the regulation of glycerol uptake and metabolism. Catalyzes the phosphorylation of glycerol to yield sn-glycerol 3-phosphate. In Clostridium botulinum (strain 657 / Type Ba4), this protein is Glycerol kinase.